Reading from the N-terminus, the 552-residue chain is 4-coumarate--CoA ligase-like 3 (552 aa).

ATP contacts are provided by S207, S208, G209, T210, T211, and K215. F252 contacts (E)-4-coumaroyl-AMP. R273 contributes to the CoA binding site. Positions 275-346 are SBD1; it reads GLDDMMQAVE…EKYPTVNIFQ (72 aa). Residues G324, Q346, G347, and T351 each coordinate (E)-4-coumaroyl-AMP. 5 residues coordinate ATP: Q346, G347, T351, D432, and R447. The interval 347–411 is SBD2; sequence GYALTESHGS…LKGPSISKGY (65 aa). (E)-4-coumaroyl-AMP contacts are provided by K449 and K453. The CoA site is built by K455 and G456. K538 contributes to the ATP binding site. The Microbody targeting signal motif lies at 550–552; that stretch reads SKL.

It belongs to the ATP-dependent AMP-binding enzyme family. Mg(2+) serves as cofactor.

Its subcellular location is the peroxisome. The catalysed reaction is (E)-4-coumarate + ATP + CoA = (E)-4-coumaroyl-CoA + AMP + diphosphate. The enzyme catalyses (E)-4-coumarate + ATP + H(+) = (E)-4-coumaroyl-AMP + diphosphate. It carries out the reaction (E)-4-coumaroyl-AMP + CoA = (E)-4-coumaroyl-CoA + AMP + H(+). Functionally, carboxylate--CoA ligase that may use 4-coumarate as substrate. Follows a two-step reaction mechanism, wherein the carboxylate substrate first undergoes adenylation by ATP, followed by a thioesterification in the presence of CoA to yield the final CoA thioester. The polypeptide is 4-coumarate--CoA ligase-like 3 (Arabidopsis thaliana (Mouse-ear cress)).